A 118-amino-acid chain; its full sequence is UPF0102 protein lpp3065 (118 aa).

This sequence belongs to the UPF0102 family.

The sequence is that of UPF0102 protein lpp3065 from Legionella pneumophila (strain Paris).